The following is a 193-amino-acid chain: Non-canonical purine NTP pyrophosphatase homolog (193 aa).

This sequence belongs to the HAM1 NTPase family.

The chain is Non-canonical purine NTP pyrophosphatase homolog from Halalkalibacterium halodurans (strain ATCC BAA-125 / DSM 18197 / FERM 7344 / JCM 9153 / C-125) (Bacillus halodurans).